Here is a 263-residue protein sequence, read N- to C-terminus: Non-functional protein STAY-GREEN, chloroplastic (263 aa).

The transit peptide at 1 to 54 (MDTLTSAPLLTSKFKPSFSPQQKPCFPHRRRFENGKKKQSIVPVARLFGPAIFE) directs the protein to the chloroplast.

It belongs to the staygreen family.

The protein resides in the plastid. The protein localises to the chloroplast. In terms of biological role, non-functional protein probably interfering with the disassembling mechanism of the intact light-harvesting complex of photosystem II (LHCII) in the thylakoid membranes. Responsible for a stay-green phenotype. The polypeptide is Non-functional protein STAY-GREEN, chloroplastic (SGR) (Pisum sativum (Garden pea)).